Reading from the N-terminus, the 604-residue chain is METYKGIQFFSNKGTVKNAFKKSNLGYEVMLDRKEDENFIYSNYEHVETQVEKDSKGMVVCKKYKNTYEILVEKVKEKRLGVLLVGIGGNNATTMLGGICANAKDLSYMNKCDLKRSNYLGSVFLSSNIRLGYNEKDKEHAYAPIYKLIDIYNPENIVYGGWDINNMNLKDCLVRNKVFDNEVIEKIKDDLDYVPLKSVYFKGNFIAGNQQRRVNNILYGKNKLEILEQVREQIRNFKKQNNLNELIVLWSGNTEKNIPHIPGVNDTFLNILHACKKNHESVSPSVIYALAAILENSPFINSSPQNTLVSAVVQLAQQKGIFIIGNDLKTGQTKIKNFLLDFYFGTGLKPKSIVSYNHLGNNDGKNLSSDLQFYSKKVSKSNLICDYVRANENLYVDDEKDTNVLVKKSIDYCEGDSLNEKGKVSADIEDDCTYVESLEKQKVNSEIVIKYVPYVGDDKKAIDEYISEIFMNGKNTIVLYNICQDSMLASPILIDLILLVELSQRVFFKPNQEKKTNEDEHLLNENIQIEDYKLSHTILKPKYSSFKNLDSVLFLSSLFCKSPFNSTVYKTRHSFFSQLESLWNFVRIISGLPIDAHIDLPYMI.

25 residues coordinate NAD(+): glycine 88, glycine 89, asparagine 90, asparagine 91, aspartate 163, serine 198, valine 199, glutamine 210, arginine 213, serine 251, glycine 252, asparagine 253, threonine 254, serine 303, aspartate 327, leucine 328, threonine 330, asparagine 361, asparagine 362, aspartate 363, lysine 376, glycine 456, aspartate 457, aspartate 485, and serine 486.

It belongs to the myo-inositol 1-phosphate synthase family. It depends on NAD(+) as a cofactor.

It catalyses the reaction D-glucose 6-phosphate = 1D-myo-inositol 3-phosphate. It functions in the pathway polyol metabolism; myo-inositol biosynthesis; myo-inositol from D-glucose 6-phosphate: step 1/2. In terms of biological role, key enzyme in myo-inositol biosynthesis pathway that catalyzes the conversion of glucose 6-phosphate to 1-myo-inositol 1-phosphate in a NAD-dependent manner. Rate-limiting enzyme in the synthesis of all inositol-containing compounds. De novo-synthesized myo-inositol is essential for incorporation into GPI (glycosylphosphatidylinositol) glycolipids during intra-erythrocytic development. The protein is Inositol-3-phosphate synthase 1 of Plasmodium falciparum (isolate 3D7).